A 440-amino-acid chain; its full sequence is 2-methylisoborneol synthase (440 aa).

Residues 1–116 (MPDSGPLGPH…SPAPAEPAAG (116 aa)) form a disordered region. Residues 17–27 (TPATTVPDAPA) show a composition bias toward low complexity. Over residues 48 to 58 (PPVPIPSPSPP) the composition is skewed to pro residues. Over residues 59 to 75 (SGSASAAADTPDATTVG) the composition is skewed to low complexity. The span at 102 to 111 (PSLPGSPAPA) shows a compositional bias: pro residues. Positions 197, 198, 202, 345, 349, and 353 each coordinate Mg(2+).

Belongs to the terpene synthase family. 2-methylisoborneol synthase subfamily. Requires Mg(2+) as cofactor.

It carries out the reaction (E)-2-methylgeranyl diphosphate + H2O = 2-methylisoborneol + diphosphate. Catalyzes the cyclization of 2-methylgeranyl diphosphate (2-MeGPP) to 2-methylisoborneol (2-MIB), which likely involves the intermediacy of 2-methyllinalyl diphosphate. In Streptomyces ambofaciens (strain ATCC 23877 / 3486 / DSM 40053 / JCM 4204 / NBRC 12836 / NRRL B-2516), this protein is 2-methylisoborneol synthase.